Reading from the N-terminus, the 259-residue chain is S-methyl-5'-thioadenosine phosphorylase (259 aa).

Residues S9 and 50–51 each bind phosphate; that span reads RH. M175 serves as a coordination point for substrate. Residue T176 coordinates phosphate. Residue 199–201 participates in substrate binding; the sequence is DLD.

It belongs to the PNP/MTAP phosphorylase family. MTAP subfamily. Homohexamer. Dimer of a homotrimer.

The enzyme catalyses S-methyl-5'-thioadenosine + phosphate = 5-(methylsulfanyl)-alpha-D-ribose 1-phosphate + adenine. The protein operates within amino-acid biosynthesis; L-methionine biosynthesis via salvage pathway; S-methyl-5-thio-alpha-D-ribose 1-phosphate from S-methyl-5'-thioadenosine (phosphorylase route): step 1/1. Catalyzes the reversible phosphorylation of S-methyl-5'-thioadenosine (MTA) to adenine and 5-methylthioribose-1-phosphate. Involved in the breakdown of MTA, a major by-product of polyamine biosynthesis. Responsible for the first step in the methionine salvage pathway after MTA has been generated from S-adenosylmethionine. Has broad substrate specificity with 6-aminopurine nucleosides as preferred substrates. The protein is S-methyl-5'-thioadenosine phosphorylase of Mycolicibacterium smegmatis (strain ATCC 700084 / mc(2)155) (Mycobacterium smegmatis).